The chain runs to 319 residues: 4-hydroxy-3-methylbut-2-enyl diphosphate reductase (319 aa).

Cys-15 contacts [4Fe-4S] cluster. The (2E)-4-hydroxy-3-methylbut-2-enyl diphosphate site is built by His-44 and His-77. 2 residues coordinate dimethylallyl diphosphate: His-44 and His-77. The isopentenyl diphosphate site is built by His-44 and His-77. Cys-99 serves as a coordination point for [4Fe-4S] cluster. His-127 is a binding site for (2E)-4-hydroxy-3-methylbut-2-enyl diphosphate. His-127 contributes to the dimethylallyl diphosphate binding site. An isopentenyl diphosphate-binding site is contributed by His-127. Glu-129 functions as the Proton donor in the catalytic mechanism. Position 167 (Thr-167) interacts with (2E)-4-hydroxy-3-methylbut-2-enyl diphosphate. Cys-197 contacts [4Fe-4S] cluster. (2E)-4-hydroxy-3-methylbut-2-enyl diphosphate is bound by residues Ser-225, Ser-226, Asn-227, and Ser-269. The dimethylallyl diphosphate site is built by Ser-225, Ser-226, Asn-227, and Ser-269. Ser-225, Ser-226, Asn-227, and Ser-269 together coordinate isopentenyl diphosphate.

The protein belongs to the IspH family. The cofactor is [4Fe-4S] cluster.

It carries out the reaction isopentenyl diphosphate + 2 oxidized [2Fe-2S]-[ferredoxin] + H2O = (2E)-4-hydroxy-3-methylbut-2-enyl diphosphate + 2 reduced [2Fe-2S]-[ferredoxin] + 2 H(+). It catalyses the reaction dimethylallyl diphosphate + 2 oxidized [2Fe-2S]-[ferredoxin] + H2O = (2E)-4-hydroxy-3-methylbut-2-enyl diphosphate + 2 reduced [2Fe-2S]-[ferredoxin] + 2 H(+). The protein operates within isoprenoid biosynthesis; dimethylallyl diphosphate biosynthesis; dimethylallyl diphosphate from (2E)-4-hydroxy-3-methylbutenyl diphosphate: step 1/1. Its pathway is isoprenoid biosynthesis; isopentenyl diphosphate biosynthesis via DXP pathway; isopentenyl diphosphate from 1-deoxy-D-xylulose 5-phosphate: step 6/6. Functionally, catalyzes the conversion of 1-hydroxy-2-methyl-2-(E)-butenyl 4-diphosphate (HMBPP) into a mixture of isopentenyl diphosphate (IPP) and dimethylallyl diphosphate (DMAPP). Acts in the terminal step of the DOXP/MEP pathway for isoprenoid precursor biosynthesis. This chain is 4-hydroxy-3-methylbut-2-enyl diphosphate reductase, found in Rhodopirellula baltica (strain DSM 10527 / NCIMB 13988 / SH1).